A 419-amino-acid chain; its full sequence is UDP-N-acetylglucosamine 1-carboxyvinyltransferase (419 aa).

22 to 23 (KN) contributes to the phosphoenolpyruvate binding site. Arginine 93 serves as a coordination point for UDP-N-acetyl-alpha-D-glucosamine. The active-site Proton donor is cysteine 117. Position 117 is a 2-(S-cysteinyl)pyruvic acid O-phosphothioketal (cysteine 117). Residues aspartate 307 and isoleucine 329 each coordinate UDP-N-acetyl-alpha-D-glucosamine.

The protein belongs to the EPSP synthase family. MurA subfamily.

Its subcellular location is the cytoplasm. It carries out the reaction phosphoenolpyruvate + UDP-N-acetyl-alpha-D-glucosamine = UDP-N-acetyl-3-O-(1-carboxyvinyl)-alpha-D-glucosamine + phosphate. It participates in cell wall biogenesis; peptidoglycan biosynthesis. In terms of biological role, cell wall formation. Adds enolpyruvyl to UDP-N-acetylglucosamine. The chain is UDP-N-acetylglucosamine 1-carboxyvinyltransferase from Shewanella putrefaciens (strain CN-32 / ATCC BAA-453).